The chain runs to 244 residues: ATP synthase subunit O, mitochondrial (244 aa).

A mitochondrion-targeting transit peptide spans Met-1–Tyr-45.

It belongs to the ATPase delta chain family. F-type ATPases have 2 components, CF(1) - the catalytic core - and CF(0) - the membrane proton channel. CF(1) has five subunits: alpha(3), beta(3), gamma(1), delta(1), epsilon(1). CF(0) has three main subunits: a, b and c.

It localises to the mitochondrion. It is found in the mitochondrion inner membrane. Functionally, mitochondrial membrane ATP synthase (F(1)F(0) ATP synthase or Complex V) produces ATP from ADP in the presence of a proton gradient across the membrane which is generated by electron transport complexes of the respiratory chain. F-type ATPases consist of two structural domains, F(1) - containing the extramembraneous catalytic core and F(0) - containing the membrane proton channel, linked together by a central stalk and a peripheral stalk. During catalysis, ATP synthesis in the catalytic domain of F(1) is coupled via a rotary mechanism of the central stalk subunits to proton translocation. Part of the complex F(0) domain and the peripheric stalk, which acts as a stator to hold the catalytic alpha(3)beta(3) subcomplex and subunit a/ATP6 static relative to the rotary elements. The protein is ATP synthase subunit O, mitochondrial of Ipomoea batatas (Sweet potato).